The primary structure comprises 207 residues: 8-oxoguanine DNA glycosylase/AP lyase (207 aa).

Catalysis depends on residues K129 and D147.

It belongs to the type-2 OGG1 family.

It catalyses the reaction 2'-deoxyribonucleotide-(2'-deoxyribose 5'-phosphate)-2'-deoxyribonucleotide-DNA = a 3'-end 2'-deoxyribonucleotide-(2,3-dehydro-2,3-deoxyribose 5'-phosphate)-DNA + a 5'-end 5'-phospho-2'-deoxyribonucleoside-DNA + H(+). Its function is as follows. Catalyzes the excision of an oxidatively damaged form of guanine (7,8-dihydro-8-oxoguanine = 8-oxoG) from DNA. Also cleaves the DNA backbone at apurinic/apyrimidinic sites (AP sites). Has little specificity for the base opposite oxoG. This chain is 8-oxoguanine DNA glycosylase/AP lyase, found in Methanocaldococcus jannaschii (strain ATCC 43067 / DSM 2661 / JAL-1 / JCM 10045 / NBRC 100440) (Methanococcus jannaschii).